We begin with the raw amino-acid sequence, 344 residues long: Heat-inducible transcription repressor HrcA (344 aa).

This sequence belongs to the HrcA family.

In terms of biological role, negative regulator of class I heat shock genes (grpE-dnaK-dnaJ and groELS operons). Prevents heat-shock induction of these operons. This chain is Heat-inducible transcription repressor HrcA, found in Geobacillus stearothermophilus (Bacillus stearothermophilus).